We begin with the raw amino-acid sequence, 505 residues long: Katanin p60 ATPase-containing subunit A-like 2 (505 aa).

The 33-residue stretch at arginine 25–serine 57 folds into the LisH domain. Disordered stretches follow at residues leucine 94–glutamine 127 and arginine 140–glutamate 167. Polar residues-rich tracts occupy residues glycine 114–glutamine 127 and glutamine 155–glutamate 164. Residue glycine 298 to threonine 305 participates in ATP binding.

Belongs to the AAA ATPase family. Katanin p60 subunit A1 subfamily. A-like 2 sub-subfamily.

Its subcellular location is the cytoplasm. The protein localises to the cytoskeleton. It localises to the spindle. The protein resides in the spindle pole. It carries out the reaction n ATP + n H2O + a microtubule = n ADP + n phosphate + (n+1) alpha/beta tubulin heterodimers.. Its function is as follows. Severs microtubules in vitro in an ATP-dependent manner. This activity may promote rapid reorganization of cellular microtubule arrays. This is Katanin p60 ATPase-containing subunit A-like 2 (katnal2) from Xenopus laevis (African clawed frog).